A 204-amino-acid chain; its full sequence is Inner membrane protein YagU (204 aa).

The Periplasmic portion of the chain corresponds to 1–14; it reads MNIFEQTPPNRRRY. The helical transmembrane segment at 15 to 35 threads the bilayer; sequence GLAAFIGLIAGVVSAFVKWGA. Residues 36–100 lie on the Cytoplasmic side of the membrane; that stretch reads EVPLPPRSPV…VYTFAGHVFN (65 aa). The helical transmembrane segment at 101 to 121 threads the bilayer; sequence WVGVTHIIFSIVFAVGYCVVA. At 122-132 the chain is on the periplasmic side; sequence EVFPKIKLWQG. Residues 133-153 form a helical membrane-spanning segment; sequence LLAGALAQLFVHMISFPLMGL. Residues 154–204 lie on the Cytoplasmic side of the membrane; it reads TPPLFDLPWYENVSEIFGHLVWFWSIEIIRRDLRNRITHEPDPEIPLGSNR.

As to quaternary structure, homodimer.

The protein localises to the cell inner membrane. This is Inner membrane protein YagU (yagU) from Escherichia coli (strain K12).